Consider the following 398-residue polypeptide: MSSKLQNITVLGATGSIGVSTLDVIRRHPDRYRAFALCAHSQVDKLFEQCVEFRPRFAVLRDASLAATLSERCRSVGLDTEVRYGVEALIELSSLPEVDAVMAAIVGAAGLEPTLAAARAGKKVMLANKEVLVMAGELFMHAVREYGATLLPVDSEHNAIFQSLPADFARGLESCGVQKILLTASGGPFRNSPLADLANVTPEQACAHPNWVMGRKISVDSATMMNKGLEVIEAHWLFAAPPDMIQVVVHPQSVIHSAVQYADGSVLAQLGNPDMRTPIAYAMAWPERIAAGVEPLDLFKIARLDFSAPDFERFRCLQLAYDVLREGGTAPAILNAANEVAVAAFLDGHLPFLGIALLNEAVLQAMPAGPEGSLADVLAADAEARHLAGQLIRQQRFA.

Positions 14, 15, 16, 17, 42, and 128 each coordinate NADPH. Lysine 129 contributes to the 1-deoxy-D-xylulose 5-phosphate binding site. Glutamate 130 is an NADPH binding site. Aspartate 154 is a Mn(2+) binding site. 1-deoxy-D-xylulose 5-phosphate-binding residues include serine 155, glutamate 156, serine 185, and histidine 208. Position 156 (glutamate 156) interacts with Mn(2+). Glycine 214 contacts NADPH. Residues serine 221, asparagine 226, lysine 227, and glutamate 230 each contribute to the 1-deoxy-D-xylulose 5-phosphate site. Glutamate 230 is a binding site for Mn(2+).

Belongs to the DXR family. Mg(2+) is required as a cofactor. It depends on Mn(2+) as a cofactor.

The catalysed reaction is 2-C-methyl-D-erythritol 4-phosphate + NADP(+) = 1-deoxy-D-xylulose 5-phosphate + NADPH + H(+). Its pathway is isoprenoid biosynthesis; isopentenyl diphosphate biosynthesis via DXP pathway; isopentenyl diphosphate from 1-deoxy-D-xylulose 5-phosphate: step 1/6. Functionally, catalyzes the NADPH-dependent rearrangement and reduction of 1-deoxy-D-xylulose-5-phosphate (DXP) to 2-C-methyl-D-erythritol 4-phosphate (MEP). The sequence is that of 1-deoxy-D-xylulose 5-phosphate reductoisomerase from Dechloromonas aromatica (strain RCB).